The following is a 90-amino-acid chain: Small ribosomal subunit protein uS15c (90 aa).

This sequence belongs to the universal ribosomal protein uS15 family. In terms of assembly, part of the 30S ribosomal subunit.

Its subcellular location is the plastid. It localises to the chloroplast. This chain is Small ribosomal subunit protein uS15c (rps15), found in Dioscorea elephantipes (Elephant's foot yam).